Reading from the N-terminus, the 268-residue chain is Acidic leucine-rich nuclear phosphoprotein 32 family member E (268 aa).

N-acetylmethionine is present on M1. LRR repeat units lie at residues 18-38 (EVTE…EGLN), 43-64 (ELEF…PSLN), 65-87 (KLRK…AEKC), and 89-110 (NLTY…EALQ). Residue K68 forms a Glycyl lysine isopeptide (Lys-Gly) (interchain with G-Cter in SUMO2) linkage. The LRRCT domain occupies 123-161 (CEITNLEDYRESIFELLQQITYLDGFDQEDNEAPDSEEE). 2 stretches are compositionally biased toward acidic residues: residues 149 to 216 (DQED…EEEV) and 226 to 247 (IQDE…EEEE). Residues 149-268 (DQEDNEAPDS…AEDDGEEEDD (120 aa)) form a disordered region. A ZID domain region spans residues 215–268 (EVGLSYLMKEEIQDEEDDDDYVEEGEEEEEEEEGGLRGEKRKRDAEDDGEEEDD). Basic and acidic residues predominate over residues 248 to 259 (GGLRGEKRKRDA).

It belongs to the ANP32 family. In terms of assembly, interacts with the importin alpha KPNA1 and KPNA2. Component of a SWR1-like complex, composed of EP400, KAT5/TIP60, TRRAP, BRD8, RUVBL1, RUVBL2, ING3 and ANP32E; the complex does not contain SRCAP. Interacts with H2A.Z/H2AZ1. Post-translationally, phosphorylated. The phosphorylation is nuclear localization signal (NLS)-dependent. In terms of tissue distribution, expressed in peripheral blood leukocytes, colon, small intestine, prostate, thymus, spleen, skeletal muscle, liver and kidney.

The protein resides in the cytoplasm. It localises to the nucleus. Functionally, histone chaperone that specifically mediates the genome-wide removal of histone H2A.Z/H2AZ1 from the nucleosome: removes H2A.Z/H2AZ1 from its normal sites of deposition, especially from enhancer and insulator regions. Not involved in deposition of H2A.Z/H2AZ1 in the nucleosome. May stabilize the evicted H2A.Z/H2AZ1-H2B dimer, thus shifting the equilibrium towards dissociation and the off-chromatin state. Inhibits activity of protein phosphatase 2A (PP2A). Does not inhibit protein phosphatase 1. May play a role in cerebellar development and synaptogenesis. This chain is Acidic leucine-rich nuclear phosphoprotein 32 family member E (ANP32E), found in Homo sapiens (Human).